The primary structure comprises 180 residues: Putative manganese efflux pump MntP (180 aa).

6 consecutive transmembrane segments (helical) span residues 1–21 (MLSV…ISIT), 34–54 (ILWY…IGYV), 63–83 (ISTY…LNMI), 103–123 (VTLL…TFAI), 129–149 (VIPC…GIFI), and 160–180 (KFQI…LLGF).

Belongs to the MntP (TC 9.B.29) family.

It localises to the cell membrane. Functionally, probably functions as a manganese efflux pump. In Methanosphaera stadtmanae (strain ATCC 43021 / DSM 3091 / JCM 11832 / MCB-3), this protein is Putative manganese efflux pump MntP.